Reading from the N-terminus, the 575-residue chain is Golgi-associated kinase 1A (575 aa).

Positions 1 to 29 (MASWLRRKLRGKRRPVIAFCLLMILSAMA) are cleaved as a signal peptide. Residues 30–119 (VTRFPPQRPS…GDLRHPGRVR (90 aa)) constitute a propeptide, removed in mature form. The O-glycosylated at one site stretch occupies residues 53–58 (TGAPAT). Over residues 143–153 (VGDPGTKDLGH) the composition is skewed to basic and acidic residues. A disordered region spans residues 143-162 (VGDPGTKDLGHPQHGSPIQE). Positions 437-575 (RYCCGFEPEP…NLTLFRDEDP (139 aa)) are cleaved as a propeptide — removed in mature form. The N-linked (GlcNAc...) asparagine glycan is linked to Asn566.

The protein belongs to the GASK family. In terms of processing, O-glycosylated with core 1 or possibly core 8 glycans. Proteolytically cleaved. Cleaved at Arg-120 and Arg-437 leading to a processed mature product of 35 kDa. The cleavage takes place in the Golgi apparatus. As to expression, expressed in skin, lung and colon (at protein level).

It localises to the secreted. It is found in the endoplasmic reticulum. The protein localises to the golgi apparatus. The protein resides in the membrane. Its subcellular location is the caveola. In Homo sapiens (Human), this protein is Golgi-associated kinase 1A.